The chain runs to 196 residues: Large ribosomal subunit protein bL9 (196 aa).

Residues asparagine 172–alanine 196 are disordered. The span at phenylalanine 181–alanine 196 shows a compositional bias: acidic residues.

It belongs to the bacterial ribosomal protein bL9 family.

Functionally, binds to the 23S rRNA. The sequence is that of Large ribosomal subunit protein bL9 from Chelativorans sp. (strain BNC1).